Reading from the N-terminus, the 134-residue chain is Cell division protein SepF 1 (134 aa).

Belongs to the SepF family. In terms of assembly, homodimer. Interacts with FtsZ.

It is found in the cytoplasm. Functionally, cell division protein that is part of the divisome complex and is recruited early to the Z-ring. Probably stimulates Z-ring formation, perhaps through the cross-linking of FtsZ protofilaments. Its function overlaps with FtsA. This Streptomyces avermitilis (strain ATCC 31267 / DSM 46492 / JCM 5070 / NBRC 14893 / NCIMB 12804 / NRRL 8165 / MA-4680) protein is Cell division protein SepF 1.